Here is a 128-residue protein sequence, read N- to C-terminus: Large ribosomal subunit protein uL22 (128 aa).

The protein belongs to the universal ribosomal protein uL22 family. As to quaternary structure, part of the 50S ribosomal subunit.

Functionally, this protein binds specifically to 23S rRNA; its binding is stimulated by other ribosomal proteins, e.g. L4, L17, and L20. It is important during the early stages of 50S assembly. It makes multiple contacts with different domains of the 23S rRNA in the assembled 50S subunit and ribosome. In terms of biological role, the globular domain of the protein is located near the polypeptide exit tunnel on the outside of the subunit, while an extended beta-hairpin is found that lines the wall of the exit tunnel in the center of the 70S ribosome. The chain is Large ribosomal subunit protein uL22 from Methylobacterium radiotolerans (strain ATCC 27329 / DSM 1819 / JCM 2831 / NBRC 15690 / NCIMB 10815 / 0-1).